The chain runs to 460 residues: Probable Xaa-Pro aminopeptidase VDBG_02538 (460 aa).

Asp256, Asp267, Glu390, and Glu430 together coordinate Mn(2+).

This sequence belongs to the peptidase M24B family. Mn(2+) serves as cofactor.

It carries out the reaction Release of any N-terminal amino acid, including proline, that is linked to proline, even from a dipeptide or tripeptide.. In terms of biological role, catalyzes the removal of a penultimate prolyl residue from the N-termini of peptides. The protein is Probable Xaa-Pro aminopeptidase VDBG_02538 of Verticillium alfalfae (strain VaMs.102 / ATCC MYA-4576 / FGSC 10136) (Verticillium wilt of alfalfa).